Consider the following 281-residue polypeptide: Bifunctional protein FolD (281 aa).

NADP(+) contacts are provided by residues G165–G167, T192, and V233.

The protein belongs to the tetrahydrofolate dehydrogenase/cyclohydrolase family. As to quaternary structure, homodimer.

The enzyme catalyses (6R)-5,10-methylene-5,6,7,8-tetrahydrofolate + NADP(+) = (6R)-5,10-methenyltetrahydrofolate + NADPH. It catalyses the reaction (6R)-5,10-methenyltetrahydrofolate + H2O = (6R)-10-formyltetrahydrofolate + H(+). Its pathway is one-carbon metabolism; tetrahydrofolate interconversion. Its function is as follows. Catalyzes the oxidation of 5,10-methylenetetrahydrofolate to 5,10-methenyltetrahydrofolate and then the hydrolysis of 5,10-methenyltetrahydrofolate to 10-formyltetrahydrofolate. This chain is Bifunctional protein FolD, found in Corynebacterium diphtheriae (strain ATCC 700971 / NCTC 13129 / Biotype gravis).